The following is a 463-amino-acid chain: Glycine--tRNA ligase (463 aa).

The substrate site is built by Arg100 and Glu175. Residues 207-209 (RNE), 217-222 (FRTREF), 291-292 (EL), and 335-338 (GADR) each bind ATP. 222-226 (FEQME) is a substrate binding site. 331–335 (EPSLG) provides a ligand contact to substrate.

Belongs to the class-II aminoacyl-tRNA synthetase family. Homodimer.

The protein localises to the cytoplasm. It carries out the reaction tRNA(Gly) + glycine + ATP = glycyl-tRNA(Gly) + AMP + diphosphate. Its function is as follows. Catalyzes the attachment of glycine to tRNA(Gly). The polypeptide is Glycine--tRNA ligase (Clostridium tetani (strain Massachusetts / E88)).